The following is an 808-amino-acid chain: Dynamin-related protein 3A (808 aa).

A disordered region spans residues Met-1–Ala-31. The span at Pro-16–Thr-28 shows a compositional bias: low complexity. In terms of domain architecture, Dynamin-type G spans Thr-56–Pro-330. Residues Gly-66–Ser-73 are G1 motif. A GTP-binding site is contributed by Gly-66–Ser-73. The tract at residues Cys-92–Arg-94 is G2 motif. Positions Asp-172–Gly-175 are G3 motif. Residues Asp-172 to Ile-176 and Thr-241 to Asp-244 contribute to the GTP site. The segment at Thr-241–Asp-244 is G4 motif. The segment at Val-271–Cys-274 is G5 motif. Residues Ile-548–Gly-578 are disordered. Over residues Arg-554–Arg-563 the composition is skewed to basic and acidic residues. The segment covering Thr-564–Ser-575 has biased composition (low complexity). The region spanning Ile-670–Asp-761 is the GED domain. Residues Leu-774–Phe-808 are disordered. Residues Thr-775–Thr-792 show a composition bias toward low complexity.

This sequence belongs to the TRAFAC class dynamin-like GTPase superfamily. Dynamin/Fzo/YdjA family. Homooligomer. Interacts with ARC5 on peroxisomes and ELM1 on mitochondria. In terms of tissue distribution, ubiquitous. Preferentially expressed in flowers.

It localises to the mitochondrion. It is found in the peroxisome. Functionally, involved in the control of mitochondrial and peroxisomal division and morphology. In association with PEX11C, PEX11D, PEX11E and FIS1B, is involved in cell cycle-associated constitutive self-replication of preexisting peroxisomes. This is Dynamin-related protein 3A (DRP3A) from Arabidopsis thaliana (Mouse-ear cress).